A 313-amino-acid chain; its full sequence is Protein FixB (313 aa).

255–283 (LYLAVGISGQIQHMVGANASQTIFAINKD) contributes to the FAD binding site.

The protein belongs to the ETF alpha-subunit/FixB family. Heterodimer of FixA and FixB.

It functions in the pathway amine and polyamine metabolism; carnitine metabolism. Required for anaerobic carnitine reduction. May bring reductant to CaiA. The chain is Protein FixB from Escherichia coli O139:H28 (strain E24377A / ETEC).